The sequence spans 372 residues: NAD(P)H-quinone oxidoreductase subunit 1 (372 aa).

8 helical membrane passes run 27–47 (MLWL…GVLV), 97–117 (ILFT…WLIV), 128–148 (VGVG…GLLM), 166–186 (AAQS…VVMM), 204–224 (VLSW…ICAL), 266–286 (VLSA…PIPV), 308–328 (TVGI…AILL), and 347–367 (FLLP…LAFP).

This sequence belongs to the complex I subunit 1 family. In terms of assembly, NDH-1 is composed of at least 11 different subunits.

The protein resides in the cellular thylakoid membrane. The catalysed reaction is a plastoquinone + NADH + (n+1) H(+)(in) = a plastoquinol + NAD(+) + n H(+)(out). It catalyses the reaction a plastoquinone + NADPH + (n+1) H(+)(in) = a plastoquinol + NADP(+) + n H(+)(out). Its function is as follows. NDH-1 shuttles electrons from an unknown electron donor, via FMN and iron-sulfur (Fe-S) centers, to quinones in the respiratory and/or the photosynthetic chain. The immediate electron acceptor for the enzyme in this species is believed to be plastoquinone. Couples the redox reaction to proton translocation, and thus conserves the redox energy in a proton gradient. The polypeptide is NAD(P)H-quinone oxidoreductase subunit 1 (Synechococcus sp. (strain CC9311)).